A 114-amino-acid polypeptide reads, in one-letter code: Probable 4-amino-4-deoxy-L-arabinose-phosphoundecaprenol flippase subunit ArnE (114 aa).

2 helical membrane-spanning segments follow: residues 41-61 and 68-88; these read GWLWLALFSLGLGLLVWLLVL and VAYPMLSLNFVFITLIAHFVF. Residues 43-112 form the EamA domain; the sequence is LWLALFSLGL…VIGGVLLLSR (70 aa).

This sequence belongs to the ArnE family. In terms of assembly, heterodimer of ArnE and ArnF.

The protein localises to the cell inner membrane. It participates in bacterial outer membrane biogenesis; lipopolysaccharide biosynthesis. Translocates 4-amino-4-deoxy-L-arabinose-phosphoundecaprenol (alpha-L-Ara4N-phosphoundecaprenol) from the cytoplasmic to the periplasmic side of the inner membrane. The chain is Probable 4-amino-4-deoxy-L-arabinose-phosphoundecaprenol flippase subunit ArnE from Pseudomonas fluorescens (strain ATCC BAA-477 / NRRL B-23932 / Pf-5).